A 570-amino-acid chain; its full sequence is Sulfite reductase [NADPH] hemoprotein beta-component (570 aa).

[4Fe-4S] cluster is bound by residues Cys434, Cys440, Cys479, and Cys483. Cys483 is a siroheme binding site.

Belongs to the nitrite and sulfite reductase 4Fe-4S domain family. Alpha(8)-beta(8). The alpha component is a flavoprotein, the beta component is a hemoprotein. The cofactor is siroheme. [4Fe-4S] cluster is required as a cofactor.

The enzyme catalyses hydrogen sulfide + 3 NADP(+) + 3 H2O = sulfite + 3 NADPH + 4 H(+). It participates in sulfur metabolism; hydrogen sulfide biosynthesis; hydrogen sulfide from sulfite (NADPH route): step 1/1. Functionally, component of the sulfite reductase complex that catalyzes the 6-electron reduction of sulfite to sulfide. This is one of several activities required for the biosynthesis of L-cysteine from sulfate. The sequence is that of Sulfite reductase [NADPH] hemoprotein beta-component from Salmonella arizonae (strain ATCC BAA-731 / CDC346-86 / RSK2980).